Reading from the N-terminus, the 68-residue chain is Large ribosomal subunit protein bL35 (68 aa).

Belongs to the bacterial ribosomal protein bL35 family.

The protein is Large ribosomal subunit protein bL35 of Rickettsia felis (strain ATCC VR-1525 / URRWXCal2) (Rickettsia azadi).